Here is a 303-residue protein sequence, read N- to C-terminus: Recombination-associated protein RdgC (303 aa).

This sequence belongs to the RdgC family.

The protein resides in the cytoplasm. Its subcellular location is the nucleoid. Its function is as follows. May be involved in recombination. The protein is Recombination-associated protein RdgC of Yersinia pseudotuberculosis serotype O:1b (strain IP 31758).